A 371-amino-acid polypeptide reads, in one-letter code: MKLVFTGGGTGGHIYPALALAESFRKKGDEILYIGSNDGLERRIVPEEGFDFQGIEVAPFPRNLSVHLFSSLLKTGRGFIQARKLLRKFKPDVVIGTGGFVSGPVVLAAALQKIPTVIHEQNAYPGLANRLLAPFVTRIALNFKEADRHFKEKAREKIEITGNPIRERILTTSREEGLLNLGLRKGKKNILVFGGSQGAKNINEAMIACYRYFKNNSKLQIIHLTGMRNYQEVLQDLKEKGLDPSKYTQYKIMPYLDNMEWAYAVADLVIYRAGATGLAEITAKGIPAILIPYPYATGNHQEHNARSLEKAGAAIVIKDSELKGHKLVKLIEELINDGKRLKKMAQSSKRMGKPWARNTLINLIEDTAKGS.

Residues 10–12 (TGG), Asn122, Arg166, Ser196, and Gln301 each bind UDP-N-acetyl-alpha-D-glucosamine.

It belongs to the glycosyltransferase 28 family. MurG subfamily.

Its subcellular location is the cell inner membrane. It carries out the reaction di-trans,octa-cis-undecaprenyl diphospho-N-acetyl-alpha-D-muramoyl-L-alanyl-D-glutamyl-meso-2,6-diaminopimeloyl-D-alanyl-D-alanine + UDP-N-acetyl-alpha-D-glucosamine = di-trans,octa-cis-undecaprenyl diphospho-[N-acetyl-alpha-D-glucosaminyl-(1-&gt;4)]-N-acetyl-alpha-D-muramoyl-L-alanyl-D-glutamyl-meso-2,6-diaminopimeloyl-D-alanyl-D-alanine + UDP + H(+). It participates in cell wall biogenesis; peptidoglycan biosynthesis. In terms of biological role, cell wall formation. Catalyzes the transfer of a GlcNAc subunit on undecaprenyl-pyrophosphoryl-MurNAc-pentapeptide (lipid intermediate I) to form undecaprenyl-pyrophosphoryl-MurNAc-(pentapeptide)GlcNAc (lipid intermediate II). In Halothermothrix orenii (strain H 168 / OCM 544 / DSM 9562), this protein is UDP-N-acetylglucosamine--N-acetylmuramyl-(pentapeptide) pyrophosphoryl-undecaprenol N-acetylglucosamine transferase.